A 379-amino-acid polypeptide reads, in one-letter code: Cell cycle checkpoint control protein RAD9A (379 aa).

A Phosphotyrosine modification is found at Tyr-17. Positions 40–80 (FLFAPLFFQQYQAATPGQDLLRCKILMKSFLSVFRSLAMLE) are possesses 3'-5' exonuclease activity. The sufficient for interaction with ABL1 stretch occupies residues 255–379 (SDTDSHSQDL…VLAEDSEGEG (125 aa)). The span at 257–271 (TDSHSQDLGSPERHQ) shows a compositional bias: basic and acidic residues. Disordered stretches follow at residues 257 to 289 (TDSH…DFAN) and 308 to 379 (SRVL…EGEG). Residues Ser-261, Ser-266, Ser-317, Ser-330, Ser-363, Ser-368, and Ser-375 each carry the phosphoserine modification.

Belongs to the rad9 family. As to quaternary structure, component of the toroidal 9-1-1 (RAD9-RAD1-HUS1) complex, composed of RAD9A, RAD1 and HUS1. The 9-1-1 complex associates with LIG1, POLB, FEN1, RAD17, HDAC1, RPA1 and RPA2. The 9-1-1 complex associates with the RAD17-RFC complex. RAD9A interacts with BCL2L1, FEN1, RAD9B, ABL1, RPA1, ATAD5 and RPA2. Interacts with DNAJC7. Interacts (when phosphorylated) with TOPBP1. Constitutively phosphorylated on serine and threonine amino acids in absence of DNA damage. Hyperphosphorylated by PRKCD and ABL1 upon DNA damage. Its phosphorylation by PRKCD may be required for the formation of the 9-1-1 complex. Phosphorylated at Ser-330 and Ser-375 by CK2, promoting interaction with TOPBP1.

It is found in the nucleus. The catalysed reaction is Exonucleolytic cleavage in the 3'- to 5'-direction to yield nucleoside 5'-phosphates.. Component of the 9-1-1 cell-cycle checkpoint response complex that plays a major role in DNA repair. The 9-1-1 complex is recruited to DNA lesion upon damage by the RAD17-replication factor C (RFC) clamp loader complex. Acts then as a sliding clamp platform on DNA for several proteins involved in long-patch base excision repair (LP-BER). The 9-1-1 complex stimulates DNA polymerase beta (POLB) activity by increasing its affinity for the 3'-OH end of the primer-template and stabilizes POLB to those sites where LP-BER proceeds; endonuclease FEN1 cleavage activity on substrates with double, nick, or gap flaps of distinct sequences and lengths; and DNA ligase I (LIG1) on long-patch base excision repair substrates. The 9-1-1 complex is necessary for the recruitment of RHNO1 to sites of double-stranded breaks (DSB) occurring during the S phase. RAD9A possesses 3'-&gt;5' double stranded DNA exonuclease activity. This Macaca fascicularis (Crab-eating macaque) protein is Cell cycle checkpoint control protein RAD9A (RAD9A).